A 431-amino-acid chain; its full sequence is Keratin, type I cytoskeletal 40 (431 aa).

The interval M1 to E89 is head. Residues E89 to L400 enclose the IF rod domain. The segment at K90–Q124 is coil 1A. The tract at residues C125–D135 is linker 1. Positions Y136–E236 are coil 1B. Residues Q237–V252 are linker 12. The interval D253 to E396 is coil 2. Residues D397 to A431 form a tail region.

It belongs to the intermediate filament family. In terms of assembly, heterotetramer of two type I and two type II keratins.

May play a role in late hair differentiation. The sequence is that of Keratin, type I cytoskeletal 40 (Krt40) from Rattus norvegicus (Rat).